We begin with the raw amino-acid sequence, 309 residues long: Jacalin-related lectin 25 (309 aa).

The Jacalin-type lectin domain maps to 8–190; the sequence is MFKVGPIGSQ…LTSIGIYVCP (183 aa).

It belongs to the jacalin lectin family.

The protein is Jacalin-related lectin 25 (JAL25) of Arabidopsis thaliana (Mouse-ear cress).